An 845-amino-acid polypeptide reads, in one-letter code: Proto-oncogene vav (845 aa).

A Calponin-homology (CH) domain is found at 1 to 119 (MELWRQCTHW…YTLSALSWTP (119 aa)). The DH domain maps to 194–373 (KRCCCLREIQ…RDLAQCVNEV (180 aa)). The region spanning 402–504 (RPKIDGELKI…WMEQFEMAIS (103 aa)) is the PH domain. The Phorbol-ester/DAG-type zinc-finger motif lies at 515–564 (GHDFQMFSFEETTSCKACQMLLRGTFYQGYRCYRCRAPAHKECLGRVPPC). The 69-residue stretch at 592–660 (LGLPKMEVFQ…PCNRVHPYVH (69 aa)) folds into the SH3 1 domain. The SH2 domain maps to 671-765 (WYAGPMERAG…SLDTTLQFPY (95 aa)). The SH3 2 domain occupies 782–842 (KYFGTAKARY…PSNYVEEDYS (61 aa)). 2 positions are modified to phosphotyrosine: Tyr826 and Tyr844.

Interacts with SHB. Interacts with APS, DOCK2, GRB2, GRB3, DOCK2, SLA, TEC and ZNF655/VIK. Interacts with SIAH2; without leading to its degradation. Associates with BLNK, PLCG1, GRB2 and NCK1 in a B-cell antigen receptor-dependent fashion. Interacts with CBLB; which inhibits tyrosine phosphorylation and down-regulates activity. May interact with CCPG1. Interacts with CLNK. Interacts with THEMIS2. Interacts with NEK3 and this interaction is prolactin-dependent. Interacts with ITK. Interacts with PTK2B/PYK2. Interacts with HCK. Interacts with PTK2B/PYK2. Interacts (via SH2 domain) with SYK. Interacts with ANKRD54. Interacts with CD6. Interacts with isoform 2 of CRACR2A. Interacts with LCP2; this interaction plays a role in TCR-mediated cytokine production. In terms of processing, phosphorylated by FYN. Phosphorylated on tyrosine residues by HCK in response to IFNG and bacterial lipopolysaccharide (LPS). Widely expressed in hematopoietic cells but not in other cell types. Found in the spleen and lung.

Couples tyrosine kinase signals with the activation of the Rho/Rac GTPases, thus leading to cell differentiation and/or proliferation. In Mus musculus (Mouse), this protein is Proto-oncogene vav (Vav1).